Consider the following 398-residue polypeptide: Tear acid lipase-like protein (398 aa).

Positions 1–19 are cleaved as a signal peptide; that stretch reads MSWLLSTMCLVHVCGNIFC. The active-site Nucleophile is serine 170. Residues cysteine 243 and cysteine 252 are joined by a disulfide bond. A glycan (N-linked (GlcNAc...) asparagine) is linked at asparagine 268. Active-site charge relay system residues include aspartate 340 and histidine 369.

This sequence belongs to the AB hydrolase superfamily. Lipase family. As to quaternary structure, monomer. Post-translationally, N-glycosylated. Expressed in female lacrimal gland acinar cells from where it is secreted into tears (at protein level).

It is found in the secreted. Female-specific protein which lacks detectable lipase activity against a range of substrates. Binds the hydrophobic lipid 1-aminoanthracene with high affinity. The polypeptide is Tear acid lipase-like protein (Mesocricetus auratus (Golden hamster)).